Here is a 183-residue protein sequence, read N- to C-terminus: dCTP deaminase (183 aa).

DCTP contacts are provided by residues 97-102 and Asp113; that span reads RSSFAR. Catalysis depends on Glu123, which acts as the Proton donor/acceptor. DCTP is bound by residues Tyr155 and Gln162.

This sequence belongs to the dCTP deaminase family. In terms of assembly, homotrimer.

The enzyme catalyses dCTP + H2O + H(+) = dUTP + NH4(+). It functions in the pathway pyrimidine metabolism; dUMP biosynthesis; dUMP from dCTP (dUTP route): step 1/2. Its function is as follows. Catalyzes the deamination of dCTP to dUTP. This Sulfurisphaera tokodaii (strain DSM 16993 / JCM 10545 / NBRC 100140 / 7) (Sulfolobus tokodaii) protein is dCTP deaminase.